The chain runs to 347 residues: Isopentenyl-diphosphate delta-isomerase (347 aa).

11-12 (RK) lines the substrate pocket. Residues 72-74 (AMT), Ser102, and Asn131 each bind FMN. Gln161 is a binding site for substrate. Residue Glu162 coordinates Mg(2+). Residues Lys192, Thr222, and 287–288 (AG) contribute to the FMN site.

Belongs to the IPP isomerase type 2 family. In terms of assembly, homooctamer. Dimer of tetramers. The cofactor is FMN. NADPH is required as a cofactor. Requires Mg(2+) as cofactor.

It localises to the cytoplasm. The catalysed reaction is isopentenyl diphosphate = dimethylallyl diphosphate. Its function is as follows. Involved in the biosynthesis of isoprenoids. Catalyzes the 1,3-allylic rearrangement of the homoallylic substrate isopentenyl (IPP) to its allylic isomer, dimethylallyl diphosphate (DMAPP). This Lactococcus lactis subsp. lactis (strain IL1403) (Streptococcus lactis) protein is Isopentenyl-diphosphate delta-isomerase.